Consider the following 79-residue polypeptide: Exodeoxyribonuclease 7 small subunit (79 aa).

This sequence belongs to the XseB family. Heterooligomer composed of large and small subunits.

It localises to the cytoplasm. The enzyme catalyses Exonucleolytic cleavage in either 5'- to 3'- or 3'- to 5'-direction to yield nucleoside 5'-phosphates.. Bidirectionally degrades single-stranded DNA into large acid-insoluble oligonucleotides, which are then degraded further into small acid-soluble oligonucleotides. This chain is Exodeoxyribonuclease 7 small subunit, found in Lactococcus lactis subsp. lactis (strain IL1403) (Streptococcus lactis).